The following is a 293-amino-acid chain: 4-hydroxybenzoate octaprenyltransferase (293 aa).

8 helical membrane passes run phenylalanine 41–isoleucine 61, threonine 98–leucine 118, threonine 122–phenylalanine 142, leucine 145–valine 165, glutamate 167–tyrosine 187, isoleucine 218–glutamine 238, tryptophan 241–threonine 261, and alanine 272–tyrosine 292.

It belongs to the UbiA prenyltransferase family. The cofactor is Mg(2+).

It localises to the cell inner membrane. It carries out the reaction all-trans-octaprenyl diphosphate + 4-hydroxybenzoate = 4-hydroxy-3-(all-trans-octaprenyl)benzoate + diphosphate. Its pathway is cofactor biosynthesis; ubiquinone biosynthesis. Catalyzes the prenylation of para-hydroxybenzoate (PHB) with an all-trans polyprenyl group. Mediates the second step in the final reaction sequence of ubiquinone-8 (UQ-8) biosynthesis, which is the condensation of the polyisoprenoid side chain with PHB, generating the first membrane-bound Q intermediate 3-octaprenyl-4-hydroxybenzoate. This is 4-hydroxybenzoate octaprenyltransferase from Actinobacillus pleuropneumoniae serotype 5b (strain L20).